Reading from the N-terminus, the 387-residue chain is Protein RecA (387 aa).

80–87 (GPESSGKT) serves as a coordination point for ATP. A disordered region spans residues 348–387 (LDDSEVAETEEETTASKTKAKAKKEEKAVETEEIELELED). Acidic residues-rich tracts occupy residues 349-360 (DDSEVAETEEET) and 378-387 (TEEIELELED).

It belongs to the RecA family.

It localises to the cytoplasm. Functionally, can catalyze the hydrolysis of ATP in the presence of single-stranded DNA, the ATP-dependent uptake of single-stranded DNA by duplex DNA, and the ATP-dependent hybridization of homologous single-stranded DNAs. It interacts with LexA causing its activation and leading to its autocatalytic cleavage. This chain is Protein RecA, found in Lactococcus lactis subsp. cremoris (strain MG1363).